Consider the following 98-residue polypeptide: snRNA-activating protein complex subunit 5 (98 aa).

The tract at residues 75-98 (ALELSTRSHVQEEEEEEEEEEEDS) is disordered. Residues 86–98 (EEEEEEEEEEEDS) show a composition bias toward acidic residues.

In terms of assembly, part of the SNAPc complex composed of 5 subunits: SNAPC1, SNAPC2, SNAPC3, SNAPC4 and SNAPC5. SNAPC5 interacts with SNAPC4.

It localises to the nucleus. Part of the SNAPc complex required for the transcription of both RNA polymerase II and III small-nuclear RNA genes. Binds to the proximal sequence element (PSE), a non-TATA-box basal promoter element common to these 2 types of genes. Recruits TBP and BRF2 to the U6 snRNA TATA box. The protein is snRNA-activating protein complex subunit 5 (SNAPC5) of Bos taurus (Bovine).